The following is a 73-amino-acid chain: UPF0435 protein Lm4b_01721 (73 aa).

Belongs to the UPF0435 family.

This is UPF0435 protein Lm4b_01721 from Listeria monocytogenes serotype 4b (strain CLIP80459).